Consider the following 271-residue polypeptide: tRNA pseudouridine synthase A (271 aa).

Catalysis depends on Asp52, which acts as the Nucleophile. Position 110 (Tyr110) interacts with substrate.

Belongs to the tRNA pseudouridine synthase TruA family. In terms of assembly, homodimer.

It catalyses the reaction uridine(38/39/40) in tRNA = pseudouridine(38/39/40) in tRNA. Its function is as follows. Formation of pseudouridine at positions 38, 39 and 40 in the anticodon stem and loop of transfer RNAs. In Maridesulfovibrio salexigens (strain ATCC 14822 / DSM 2638 / NCIMB 8403 / VKM B-1763) (Desulfovibrio salexigens), this protein is tRNA pseudouridine synthase A.